The sequence spans 100 residues: Small ribosomal subunit protein uS14c (100 aa).

This sequence belongs to the universal ribosomal protein uS14 family. In terms of assembly, part of the 30S ribosomal subunit.

It is found in the plastid. Its subcellular location is the chloroplast. Binds 16S rRNA, required for the assembly of 30S particles. The polypeptide is Small ribosomal subunit protein uS14c (Cyanidioschyzon merolae (strain NIES-3377 / 10D) (Unicellular red alga)).